Reading from the N-terminus, the 162-residue chain is Phosphopantetheine adenylyltransferase (162 aa).

Position 9 (Thr-9) interacts with substrate. ATP is bound by residues 9–10 and His-17; that span reads TF. Lys-41, Leu-73, and Arg-87 together coordinate substrate. Residues 88-90, Glu-98, and 123-129 contribute to the ATP site; these read GLR and FAFLSST.

The protein belongs to the bacterial CoaD family. As to quaternary structure, homohexamer. Requires Mg(2+) as cofactor.

It localises to the cytoplasm. It catalyses the reaction (R)-4'-phosphopantetheine + ATP + H(+) = 3'-dephospho-CoA + diphosphate. It functions in the pathway cofactor biosynthesis; coenzyme A biosynthesis; CoA from (R)-pantothenate: step 4/5. Reversibly transfers an adenylyl group from ATP to 4'-phosphopantetheine, yielding dephospho-CoA (dPCoA) and pyrophosphate. In Vibrio atlanticus (strain LGP32) (Vibrio splendidus (strain Mel32)), this protein is Phosphopantetheine adenylyltransferase.